We begin with the raw amino-acid sequence, 601 residues long: Sulfite reductase [NADPH] flavoprotein alpha-component (601 aa).

The 139-residue stretch at 65 to 203 folds into the Flavodoxin-like domain; the sequence is ITIISASQTG…NYNKWSQDLL (139 aa). FMN-binding positions include 71–76, 118–121, and 154–163; these read SQTGNA, STQG, and LGDTSYNLFC. The region spanning 236 to 450 is the FAD-binding FR-type domain; that stretch reads KNPAEGIILT…IQTNDNFRLP (215 aa). FAD is bound by residues Thr-324, Ile-358, 388–391, 406–408, and 421–424; these read RLYS, TVG, and GGAS. NADP(+) contacts are provided by residues 521-522, 527-531, and Asp-563; these read SQ and KIYVQ. Tyr-601 lines the FAD pocket.

This sequence belongs to the NADPH-dependent sulphite reductase flavoprotein subunit CysJ family. The protein in the N-terminal section; belongs to the flavodoxin family. In the C-terminal section; belongs to the flavoprotein pyridine nucleotide cytochrome reductase family. In terms of assembly, alpha(8)-beta(8). The alpha component is a flavoprotein, the beta component is a hemoprotein. FAD serves as cofactor. Requires FMN as cofactor.

It catalyses the reaction hydrogen sulfide + 3 NADP(+) + 3 H2O = sulfite + 3 NADPH + 4 H(+). It participates in sulfur metabolism; hydrogen sulfide biosynthesis; hydrogen sulfide from sulfite (NADPH route): step 1/1. In terms of biological role, component of the sulfite reductase complex that catalyzes the 6-electron reduction of sulfite to sulfide. This is one of several activities required for the biosynthesis of L-cysteine from sulfate. The flavoprotein component catalyzes the electron flow from NADPH -&gt; FAD -&gt; FMN to the hemoprotein component. The sequence is that of Sulfite reductase [NADPH] flavoprotein alpha-component from Buchnera aphidicola subsp. Acyrthosiphon pisum (strain APS) (Acyrthosiphon pisum symbiotic bacterium).